We begin with the raw amino-acid sequence, 321 residues long: Ribosomal RNA small subunit methyltransferase H (321 aa).

S-adenosyl-L-methionine-binding positions include 42 to 44 (GGH), D62, F86, D107, and Q114.

It belongs to the methyltransferase superfamily. RsmH family.

Its subcellular location is the cytoplasm. It carries out the reaction cytidine(1402) in 16S rRNA + S-adenosyl-L-methionine = N(4)-methylcytidine(1402) in 16S rRNA + S-adenosyl-L-homocysteine + H(+). In terms of biological role, specifically methylates the N4 position of cytidine in position 1402 (C1402) of 16S rRNA. This is Ribosomal RNA small subunit methyltransferase H from Herminiimonas arsenicoxydans.